The chain runs to 664 residues: Glycine--tRNA ligase beta subunit (664 aa).

This sequence belongs to the class-II aminoacyl-tRNA synthetase family. Tetramer of two alpha and two beta subunits.

The protein resides in the cytoplasm. The enzyme catalyses tRNA(Gly) + glycine + ATP = glycyl-tRNA(Gly) + AMP + diphosphate. In Aquifex aeolicus (strain VF5), this protein is Glycine--tRNA ligase beta subunit (glyS).